Reading from the N-terminus, the 218-residue chain is Peptidase E (218 aa).

Residues Ser-123, Asp-138, and His-160 each act as charge relay system in the active site.

This sequence belongs to the peptidase S51 family.

It is found in the cytoplasm. The enzyme catalyses Dipeptidase E catalyzes the hydrolysis of dipeptides Asp-|-Xaa. It does not act on peptides with N-terminal Glu, Asn or Gln, nor does it cleave isoaspartyl peptides.. Functionally, hydrolyzes dipeptides containing N-terminal aspartate residues. May play a role in allowing the cell to use peptide aspartate to spare carbon otherwise required for the synthesis of the aspartate family of amino acids. The chain is Peptidase E from Haemophilus influenzae (strain ATCC 51907 / DSM 11121 / KW20 / Rd).